A 308-amino-acid polypeptide reads, in one-letter code: Lipoyl synthase (308 aa).

Residues Cys-51, Cys-56, Cys-62, Cys-77, Cys-81, Cys-84, and Ser-290 each coordinate [4Fe-4S] cluster. Residues 63 to 279 form the Radical SAM core domain; that stretch reads WSKRHATFMI…ETIAKSKGFL (217 aa).

Belongs to the radical SAM superfamily. Lipoyl synthase family. [4Fe-4S] cluster is required as a cofactor.

The protein resides in the cytoplasm. The enzyme catalyses [[Fe-S] cluster scaffold protein carrying a second [4Fe-4S](2+) cluster] + N(6)-octanoyl-L-lysyl-[protein] + 2 oxidized [2Fe-2S]-[ferredoxin] + 2 S-adenosyl-L-methionine + 4 H(+) = [[Fe-S] cluster scaffold protein] + N(6)-[(R)-dihydrolipoyl]-L-lysyl-[protein] + 4 Fe(3+) + 2 hydrogen sulfide + 2 5'-deoxyadenosine + 2 L-methionine + 2 reduced [2Fe-2S]-[ferredoxin]. The protein operates within protein modification; protein lipoylation via endogenous pathway; protein N(6)-(lipoyl)lysine from octanoyl-[acyl-carrier-protein]: step 2/2. Catalyzes the radical-mediated insertion of two sulfur atoms into the C-6 and C-8 positions of the octanoyl moiety bound to the lipoyl domains of lipoate-dependent enzymes, thereby converting the octanoylated domains into lipoylated derivatives. The sequence is that of Lipoyl synthase from Pelagibacter ubique (strain HTCC1062).